Reading from the N-terminus, the 1286-residue chain is ABC transporter B family member 1 (1286 aa).

The next 2 helical transmembrane spans lie at 42 to 62 (VLMG…PLFL) and 93 to 113 (FLVV…CWMW). The ABC transmembrane type-1 1 domain maps to 44–333 (MGIGSVGAFV…SAPSMAAFAK (290 aa)). D139 is an ATP binding site. 2 consecutive transmembrane segments (helical) span residues 166–186 (LGNF…GFTA) and 187–207 (VWQL…IGGI). N217 is a glycosylation site (N-linked (GlcNAc...) asparagine). Helical transmembrane passes span 277-297 (ATYF…GYLV) and 301-321 (LTNG…GLAL). Y286 provides a ligand contact to brassinolide. In terms of domain architecture, ABC transporter 1 spans 368 to 604 (VELKNVDFSY…GENGVYAKLI (237 aa)). Residues Y377, S379, R380, G408, K409, S410, and T411 each contribute to the ATP site. The interval 614–647 (AMSNARKSSARPSSARNSVSSPIMTRNSSYGRSP) is disordered. A compositionally biased stretch (low complexity) spans 616-635 (SNARKSSARPSSARNSVSSP). The N-linked (GlcNAc...) asparagine glycan is linked to N640. The ABC transmembrane type-1 2 domain maps to 700–988 (ALLGSVGSVI…TLTLAPDFIK (289 aa)). 2 helical membrane-spanning segments follow: residues 705 to 725 (VGSV…SAVL) and 745 to 765 (YLLI…HSFW). N771 carries an N-linked (GlcNAc...) asparagine glycan. D793 contributes to the ATP binding site. N-linked (GlcNAc...) asparagine glycosylation occurs at N797. 4 helical membrane passes run 821–843 (ISVI…VLQW), 845–867 (LALV…KMFM), 932–952 (VAQF…SWLV), and 967–987 (MVLM…PDFI). Brassinolide contacts are provided by Y941 and E978. The ABC transporter 2 domain maps to 1024 to 1260 (VELKHIDFSY…HPDGIYARMI (237 aa)). Residues Y1033, R1036, G1064, K1065, and S1066 each contribute to the ATP site. The interaction with FKBP42/TWD1 stretch occupies residues 1049–1286 (ARAGKTLALV…SSSRVKEDDA (238 aa)).

Belongs to the ABC transporter superfamily. ABCB family. Multidrug resistance exporter (TC 3.A.1.201) subfamily. Interacts with 1-naphthylphthalamic acid (NPA) and FKBP42/TWD1. As to expression, ubiquitous, with high levels in peduncles. Mostly localized in young developing tissues, including meristems, as well as root and shoot apices.

It is found in the cell membrane. The enzyme catalyses (indol-3-yl)acetate(in) + ATP + H2O = (indol-3-yl)acetate(out) + ADP + phosphate + H(+). The catalysed reaction is brassinolide(in) + ATP + H2O = brassinolide(out) + ADP + phosphate + H(+). It carries out the reaction 24-epi-brassinolide(in) + ATP + H2O = 24-epi-brassinolide(out) + ADP + phosphate + H(+). It catalyses the reaction 24-epi-castasterone(in) + ATP + H2O = 24-epi-castasterone(out) + ADP + phosphate + H(+). The enzyme catalyses castasterone(in) + ATP + H2O = castasterone(out) + ADP + phosphate + H(+). Transport capacity is stimulated by the chaperone protein FKBP42/TWD1. Transport activity inhibited by 1-N-naphthylphthalamic acid (NPA), cyclopropyl propane dione (CPD), cyclosporin A, verapamil and quercetin. ATPase activity is specifically activated by bioactive brassinosteroids in a dose-dependent manner, including brassinolide (BL), 24-epiBL, 24-epicastasterone (24-epiCS) and castasterone-alkyne; BL binding leads to structural changes. Inhibited by vanadate. Brassinosteroid exporter that, in conjunction with ABCB19, supports the accumulation of exogenous brassinosteroids (BR) in the apoplast, thus promoting BR signaling initiation involving the specific receptor BRI1 and required for plant growth and stress responses. Auxin efflux transporter that acts as a negative regulator of light signaling to promote hypocotyl elongation. May contribute to the regulation of leaf position and morphology during PHOT1-mediated blue light responses involving auxin distribution, especially in low light fluence. Together with ABCB19 and in a FKBP42/TWD1-dependent manner, supports seed development by promoting stamen elongation and, to a lesser extent, anther dehiscence and pollen maturation, probably as auxin transporters. Mediates the accumulation of chlorophyll and anthocyanin, as well as the expression of genes in response to light. Participates directly in auxin efflux and thus regulates the polar (presumably basipetal) auxin transport (from root tips to root elongating zone). Also transports some auxin metabolites such as oxindoleacetic acid and indoleacetaldehyde. Involved in diverse auxin-mediated responses including gravitropism, phototropism and lateral root formation. Confers resistance to herbicides such as dicamba, pendimethalin, oryzalin, and monosodium acid methanearsonate (MSMA), but not to herbicides such as glyphosate, atrazine, bentazon and fluazifop-p-butyl. Also mediates resistance to xenobiotics such as cycloheximide and the cytokinin N6-(2-isopentenyl)adenine (2IP). This Arabidopsis thaliana (Mouse-ear cress) protein is ABC transporter B family member 1.